A 119-amino-acid polypeptide reads, in one-letter code: Large ribosomal subunit protein bL20 (119 aa).

It belongs to the bacterial ribosomal protein bL20 family.

Functionally, binds directly to 23S ribosomal RNA and is necessary for the in vitro assembly process of the 50S ribosomal subunit. It is not involved in the protein synthesizing functions of that subunit. This Anoxybacillus flavithermus (strain DSM 21510 / WK1) protein is Large ribosomal subunit protein bL20.